Reading from the N-terminus, the 378-residue chain is Chaperone protein DnaJ 2 (378 aa).

In terms of domain architecture, J spans 4–68 (DYYGLLGVSR…EKRRIVDLGG (65 aa)). The CR-type zinc finger occupies 128–210 (GVTKQVTVDT…CVGDGRVRAR (83 aa)). Residues cysteine 141, cysteine 144, cysteine 158, cysteine 161, cysteine 184, cysteine 187, cysteine 198, and cysteine 201 each coordinate Zn(2+). 4 CXXCXGXG motif repeats span residues 141–148 (CDRCQGKG), 158–165 (CDTCGGRG), 184–191 (CPTCRGVG), and 198–205 (CCQCVGDG).

The protein belongs to the DnaJ family. In terms of assembly, homodimer. Zn(2+) is required as a cofactor.

It is found in the cytoplasm. Participates actively in the response to hyperosmotic and heat shock by preventing the aggregation of stress-denatured proteins and by disaggregating proteins, also in an autonomous, DnaK-independent fashion. Unfolded proteins bind initially to DnaJ; upon interaction with the DnaJ-bound protein, DnaK hydrolyzes its bound ATP, resulting in the formation of a stable complex. GrpE releases ADP from DnaK; ATP binding to DnaK triggers the release of the substrate protein, thus completing the reaction cycle. Several rounds of ATP-dependent interactions between DnaJ, DnaK and GrpE are required for fully efficient folding. Also involved, together with DnaK and GrpE, in the DNA replication of plasmids through activation of initiation proteins. This is Chaperone protein DnaJ 2 from Mycobacterium leprae (strain TN).